Reading from the N-terminus, the 64-residue chain is uncharacterized protein (64 aa).

Residues 1–64 (MNNPNIVPPH…QNQPPQRPQY (64 aa)) form a disordered region. Residues 8–32 (PPHFNQHQQQNHNQNQPPHHMNNPN) are compositionally biased toward low complexity.

This is an uncharacterized protein from Dictyostelium discoideum (Social amoeba).